The sequence spans 206 residues: Ras-related protein Rab-7a (206 aa).

GTP is bound at residue 15 to 22 (GDSGVGKT). Residues serine 17 and serine 23 each carry the phosphoserine modification. Phosphothreonine occurs at positions 34, 40, and 64. GTP is bound by residues 34–40 (TQQYRAT) and 63–67 (DTAGQ). An Effector region motif is present at residues 37–45 (YRATVGADF). Phosphoserine is present on serine 72. Phosphotyrosine occurs at positions 78 and 88. Residues 125 to 128 (NKLD) and 157 to 158 (AK) contribute to the GTP site. Residues cysteine 205 and cysteine 206 are each lipidated (S-geranylgeranyl cysteine).

This sequence belongs to the small GTPase superfamily. Rab family.

It is found in the cytoplasmic vesicle. It localises to the phagosome membrane. Its subcellular location is the late endosome membrane. The protein resides in the lysosome membrane. The protein localises to the autophagosome membrane. It is found in the lipid droplet. It carries out the reaction GTP + H2O = GDP + phosphate + H(+). Functionally, small GTPase which cycles between active GTP-bound and inactive GDP-bound states. In its active state, binds to a variety of effector proteins playing a key role in the regulation of endo-lysosomal trafficking. Governs early-to-late endosomal maturation, microtubule minus-end as well as plus-end directed endosomal migration and positioning, and endosome-lysosome transport through different protein-protein interaction cascades. Involved in lipophagy, a cytosolic lipase-independent autophagic pathway. Plays a role in phagocyte formation and acidification. The protein is Ras-related protein Rab-7a of Paramecium octaurelia.